We begin with the raw amino-acid sequence, 179 residues long: NADH-quinone oxidoreductase subunit I (179 aa).

4Fe-4S ferredoxin-type domains lie at 45-74 (RHPD…VEAA) and 90-119 (KVYE…LGNE). Positions 54, 57, 60, 64, 99, 102, 105, and 109 each coordinate [4Fe-4S] cluster. The tract at residues 146–179 (PQRREAQRTGKPVRLGFKVPKGPRPELEGVEYPR) is disordered. The segment covering 168–179 (PRPELEGVEYPR) has biased composition (basic and acidic residues).

It belongs to the complex I 23 kDa subunit family. NDH-1 is composed of 15 different subunits. Subunits NuoA, H, J, K, L, M, N constitute the membrane sector of the complex. The cofactor is [4Fe-4S] cluster.

The protein resides in the cell membrane. The catalysed reaction is a quinone + NADH + 5 H(+)(in) = a quinol + NAD(+) + 4 H(+)(out). In terms of biological role, NDH-1 shuttles electrons from NADH, via FMN and iron-sulfur (Fe-S) centers, to quinones in the respiratory chain. The immediate electron acceptor for the enzyme in this species is believed to be ubiquinone. Couples the redox reaction to proton translocation (for every two electrons transferred, four hydrogen ions are translocated across the cytoplasmic membrane), and thus conserves the redox energy in a proton gradient. The chain is NADH-quinone oxidoreductase subunit I from Deinococcus geothermalis (strain DSM 11300 / CIP 105573 / AG-3a).